Here is a 749-residue protein sequence, read N- to C-terminus: Phototropin (749 aa).

The region spanning 7–80 (PASQLTKVLA…QKIRDAIKKG (74 aa)) is the PAS 1 domain. FMN is bound by residues 56-61 (NCRFLQ), R74, N89, N99, and Q120. The residue at position 57 (C57) is an S-4a-FMN cysteine. A PAC 1 domain is found at 81-135 (EACSVRLLNYRKDGTPFWNLLTVTPIKTPDGRVSKFVGVQVDVTSKTEGKALADN). The region spanning 200 to 273 (VALDLATTVE…DQIRAAIKEG (74 aa)) is the PAS 2 domain. The 55-residue stretch at 274-328 (SELTVRILNYTKAGKAFWNMFTLAPMRDQDGHARFFVGVQVDVTAQSTSPDKAPV) folds into the PAC 2 domain. The Protein kinase domain occupies 404–712 (FRRVKQLGAG…ANEIKSHPWF (309 aa)). Residues 410-418 (LGAGDVGLV) and K433 contribute to the ATP site. D529 (proton acceptor) is an active-site residue. Disordered regions lie at residues 563–591 (KIGG…SSSG) and 729–749 (PRRA…FDNY). The AGC-kinase C-terminal domain maps to 713-749 (KGINWALLRHQQPPYVPRRASKAAGGSSTGGAAFDNY). Residues 734 to 749 (KAAGGSSTGGAAFDNY) are compositionally biased toward low complexity.

The protein belongs to the protein kinase superfamily. AGC Ser/Thr protein kinase family. Requires FMN as cofactor. Autophosphorylated in response to blue light irradiation. In terms of processing, 2 molecules of FMN bind covalently to cysteines after exposure to blue light and are reversed in the dark. As to expression, expressed in gametes, pre-gametes and gametes generated by pre-gametes (at protein level).

Its subcellular location is the membrane. It catalyses the reaction L-seryl-[protein] + ATP = O-phospho-L-seryl-[protein] + ADP + H(+). The catalysed reaction is L-threonyl-[protein] + ATP = O-phospho-L-threonyl-[protein] + ADP + H(+). In terms of biological role, protein kinase that acts as a blue light photoreceptor. Required for non-photochemical quenching (NPQ), a mechanism that converts and dissipates the harmful excess absorbed light energy into heat and protect the photosynthetic apparatus from photo-oxidative damage. Controls the energy-dependent chlorophyll fluorescence quenching (qE) activity of chlorophyll excited states by inducing the expression of the qE effector protein LHCSR3 in high light intensities. The polypeptide is Phototropin (Chlamydomonas reinhardtii (Chlamydomonas smithii)).